We begin with the raw amino-acid sequence, 98 residues long: Large ribosomal subunit protein uL23 (98 aa).

This sequence belongs to the universal ribosomal protein uL23 family. In terms of assembly, part of the 50S ribosomal subunit. Contacts protein L29, and trigger factor when it is bound to the ribosome.

In terms of biological role, one of the early assembly proteins it binds 23S rRNA. One of the proteins that surrounds the polypeptide exit tunnel on the outside of the ribosome. Forms the main docking site for trigger factor binding to the ribosome. This is Large ribosomal subunit protein uL23 from Streptococcus gordonii (strain Challis / ATCC 35105 / BCRC 15272 / CH1 / DL1 / V288).